We begin with the raw amino-acid sequence, 392 residues long: Early estrogen-induced gene 1 protein (392 aa).

The 144-residue stretch at 2-145 (AFLMKKKKFK…ILKVTIGMFL (144 aa)) folds into the C2 NT-type domain. Residues 129-138 (NTRQDNSILK) are required for interaction with TNFRSF11A/RANK. A disordered region spans residues 173–324 (LTCKGGGTSS…RKKDSVESHP (152 aa)). The segment covering 183 to 194 (GGSSSTNSLTGS) has biased composition (low complexity). Residues 228-255 (SRNSSYASQQSKLSGYSTEHSRSSSLSD) are compositionally biased toward polar residues. Residues 262-273 (TSTSSSASGGLS) show a composition bias toward low complexity. 2 stretches are compositionally biased toward basic and acidic residues: residues 281–300 (GMER…EKPP) and 307–324 (HLSD…ESHP).

Belongs to the EEIG family. Part of a complex composed of EEIG1, TNFRSF11A/RANK, PLCG2, GAB2, TEC and BTK; complex formation increases in the presence of TNFSF11/RANKL. Interacts with PRDM1/BLIMP1; following TNFSF11/RANKL stimulation in bone marrow-derived macrophages, the interaction promotes the binding of PRDM1/BLIMP1 to the gene promoter of IRF8. Interacts (via N-terminus) with TNFRSF11A/RANK (via cytoplasmic domain); when in the presence of TNFSF11/RANKL. As to expression, expressed during TNFSF11/RANKL-induced differentiation of bone marrow-derived macrophages to osteoclasts.

It localises to the nucleus. It is found in the cytoplasm. The protein localises to the membrane raft. Its function is as follows. Key component of TNFSF11/RANKL- and TNF-induced osteoclastogenesis pathways, thereby mediates bone resorption in pathological bone loss conditions. Required for TNFSF11/RANKL-induced osteoclastogenesis via its interaction with TNFRSF11A/RANK, thereby facilitates the downsteam transcription of NFATC1 and activation of PLCG2. Facilitates recruitment of the transcriptional repressor PRDM1/BLIMP1 to the promoter of the anti-osteoclastogenesis gene IRF8, thereby resulting in transcription of osteoclast differentiation factors. May play a role in estrogen action. The polypeptide is Early estrogen-induced gene 1 protein (Eeig1) (Mus musculus (Mouse)).